A 2892-amino-acid chain; its full sequence is Inositol 1,4,5-trisphosphate receptor itr-1 (2892 aa).

The Cytoplasmic segment spans residues M1 to S2475. MIR domains are found at residues G192 to A246, Q319 to V379, G386 to T466, and N490 to V551. R357–R361 contributes to the 1D-myo-inositol 1,4,5-trisphosphate binding site. Residues K625 to R628 and Y689 to K691 each bind 1D-myo-inositol 1,4,5-trisphosphate. The segment at M1030–T1056 is disordered. Basic and acidic residues predominate over residues G1034 to A1043. The chain crosses the membrane as a helical span at residues I2476–Y2496. The Extracellular portion of the chain corresponds to L2497–S2514. The helical transmembrane segment at L2515 to L2535 threads the bilayer. The Cytoplasmic segment spans residues Q2536–V2572. Residues Y2573 to F2593 traverse the membrane as a helical segment. Residues D2594–S2615 are Extracellular-facing. Residues I2616 to L2636 form a helical membrane-spanning segment. At Y2637–T2735 the chain is on the cytoplasmic side. Residues A2655–C2666 show a composition bias toward polar residues. The segment at A2655 to E2685 is disordered. A helical transmembrane segment spans residues F2736–F2756. The Extracellular portion of the chain corresponds to G2757–R2892.

The protein belongs to the InsP3 receptor family. In terms of assembly, interacts with myo-1, myo-2, unc-54/myo-4 and nmy-2. Also interacts with iri-1. In terms of tissue distribution, isoform a is expressed in the anterior cells of the pharyngeal terminal bulb, vulva, rectal epithelial cells, spicule protractor muscles of the proctodeum and male-specific neuron CP8 or CP9. Isoform d is expressed in the spermatheca, excretory cell, amphid socket cells, PDA motor neuron, spicule retractor muscles, gubernaculum retractor muscles, posterior oblique muscles, diagonal muscles and the vas deferens. Also expressed in the intestine, pharynx, pharyngeal isthmus, pharyngeal intestinal valve, somatic gonad, hypodermal cells of the vulva, uterine sheath cells, tail, head, LUA motor neuron and the embryonic epidermis (at protein level).

The protein resides in the endoplasmic reticulum membrane. Functionally, receptor for inositol 1,4,5-trisphosphate, a second messenger that regulates intracellular calcium homeostasis. Binds in vitro to both inositol 1,4,5-trisphosphate (1,4,5-InsP3) and inositol 2,4,5-trisphosphate (2,4,5-InsP3) with high affinity and does not discriminate between the phosphate at 1 or 2 position. Can also bind inositol 1,3,4,5-tetrakisphosphate (1,3,4,5-InsP4) and inositol 4,5-bisphosphate (4,5-InsP2), but with lower affinity. Acts as a timekeeper/rhythm generator via calcium signaling, affecting the defecation cycle and pharyngeal pumping. Affects normal hermaphrodite and male fertility as a participant in intracellular signaling by acting downstream of let-23/lin-3 which regulates ovulation, spermathecal valve dilation and male mating behavior. Important for early embryonic development; controls epidermal cell migration and may also regulate filopodial protrusive activity during epithelial morphogenesis. Component of inositol trisphosphate (IP3)-mediated downstream signaling pathways that controls amphid sensory neuronal (ASH)-mediated response to nose touch and benzaldehyde but not other ASH-mediated responses. Involved in modulating lifespan, acting downstream of transcription factor atf-6. This chain is Inositol 1,4,5-trisphosphate receptor itr-1, found in Caenorhabditis elegans.